We begin with the raw amino-acid sequence, 856 residues long: DNA mismatch repair protein MutS (856 aa).

ATP is bound at residue 600–607 (GPNMSGKS).

It belongs to the DNA mismatch repair MutS family.

Its function is as follows. This protein is involved in the repair of mismatches in DNA. It is possible that it carries out the mismatch recognition step. This protein has a weak ATPase activity. In Lactobacillus acidophilus (strain ATCC 700396 / NCK56 / N2 / NCFM), this protein is DNA mismatch repair protein MutS.